We begin with the raw amino-acid sequence, 352 residues long: Beta-methylmalyl-CoA dehydratase (352 aa).

The MaoC-like domain occupies 16–129; the sequence is LGQTIVHATP…GKTGVVYVHS (114 aa). Substrate contacts are provided by residues 62 to 65, 85 to 88, and 96 to 98; these read PIDS, IANL, and GAV.

As to quaternary structure, homodimer.

The enzyme catalyses (2R,3S)-beta-methylmalyl-CoA = 2-methylfumaryl-CoA + H2O. Involved in the glyoxylate assimilation cycle used to regenerate acetyl-CoA and produce pyruvate as universal precursor for biosynthesis. Catalyzes the reversible dehydration of beta-methylmalyl-CoA ((2R,3S)-beta-methylmalyl-CoA) to yield mesaconyl-CoA (2-methylfumaryl-CoA). In Chloroflexus aurantiacus (strain ATCC 29366 / DSM 635 / J-10-fl), this protein is Beta-methylmalyl-CoA dehydratase (mch).